A 341-amino-acid polypeptide reads, in one-letter code: Alpha-ketoglutarate-dependent dioxygenase oryG (341 aa).

Substrate is bound at residue H100. Positions 140 and 142 each coordinate Fe cation. Residue T167 participates in 2-oxoglutarate binding. H299 lines the Fe cation pocket. 2-oxoglutarate-binding residues include R311 and R315. R315 is a substrate binding site.

Belongs to the TfdA dioxygenase family. Fe(2+) is required as a cofactor.

It participates in secondary metabolite biosynthesis. Its function is as follows. Alpha-ketoglutarate-dependent dioxygenase; part of the gene cluster that mediates the biosynthesis of oryzines, natural products with an unusual maleidride backbone. The two subunits of the fungal fatty acid synthase oryfasA and oryfasB probably form octenoic acid. This fatty acid is most likely activated by the acyl-CoA ligase oryP to give octenyl-CoA before the citrate synthase-like protein oryE catalyzes condensation with oxaloacetate to form tricarboxylic acid. The next steps of the pathways are conjectural, but a favorite possible route has been proposed, beginning with decarboxylation and concomitant dehydration by the decarboxylase oryM, followed by tautomerization, which may lead to the production of a diene intermediate. Reduction of this diene intermediate could give the known metabolite piliformic acid. On the pathway to oryzine B and oryzine A, however, hydroxylation of the diene by the alpha-ketoglutarate-dependent dioxygenase oryG and lactonisation by the lactonohydrolases oryH or oryL could give oryzine B directly. Finally, enoyl reduction by the dehydrogenase oryD would then convert oryzine B into oryzine A. In Aspergillus oryzae (strain ATCC 42149 / RIB 40) (Yellow koji mold), this protein is Alpha-ketoglutarate-dependent dioxygenase oryG.